A 111-amino-acid polypeptide reads, in one-letter code: Ferredoxin, 2Fe-2S (111 aa).

4 residues coordinate [2Fe-2S] cluster: C10, C23, C56, and C60.

As to quaternary structure, homodimer in solution. [2Fe-2S] cluster serves as cofactor.

In terms of biological role, ferredoxins are iron-sulfur proteins that transfer electrons in a wide variety of metabolic reactions. In Aquifex aeolicus (strain VF5), this protein is Ferredoxin, 2Fe-2S (fdx4).